Here is a 423-residue protein sequence, read N- to C-terminus: tRNA(Ile)-lysidine synthase (423 aa).

Residue 18 to 23 (SGGADS) coordinates ATP.

It belongs to the tRNA(Ile)-lysidine synthase family.

It is found in the cytoplasm. The enzyme catalyses cytidine(34) in tRNA(Ile2) + L-lysine + ATP = lysidine(34) in tRNA(Ile2) + AMP + diphosphate + H(+). Ligates lysine onto the cytidine present at position 34 of the AUA codon-specific tRNA(Ile) that contains the anticodon CAU, in an ATP-dependent manner. Cytidine is converted to lysidine, thus changing the amino acid specificity of the tRNA from methionine to isoleucine. The sequence is that of tRNA(Ile)-lysidine synthase from Aromatoleum aromaticum (strain DSM 19018 / LMG 30748 / EbN1) (Azoarcus sp. (strain EbN1)).